A 1896-amino-acid polypeptide reads, in one-letter code: Obscurin-like protein 1 (1896 aa).

The residue at position 10 (serine 10) is a Phosphoserine. One can recognise an Ig-like 1 domain in the interval 12–100; sequence PCFLRFPRPV…GEAYAAAAVT (89 aa). Residues 17 to 19 form an interaction with TTN region; sequence FPR. A disulfide bridge connects residues cysteine 33 and cysteine 84. The tract at residues 85-94 is interaction with TTN; it reads RARNAAGEAY. The interval 106–127 is disordered; that stretch reads ASDPELQPAERPLPSPGSGEGA. Ig-like domains follow at residues 128–225, 243–330, and 339–425; these read PVFL…ALLQ, PVVE…QTLS, and PRLR…ANVT. Intrachain disulfides connect cysteine 149–cysteine 209, cysteine 267–cysteine 319, and cysteine 362–cysteine 412. A Fibronectin type-III domain is found at 517–615; sequence PPGPPILAEM…FHGSAHLVPT (99 aa). Ig-like domains follow at residues 714-800, 804-893, 902-982, 986-1075, 1078-1172, 1174-1261, 1265-1357, 1357-1534, 1628-1720, and 1794-1896; these read PVHI…FGVT, PPVH…VTIT, PSGK…FTVT, PPVR…VTVT, PERI…PPVQ, LALE…FTVQ, PPVR…VEEP, PLLV…ARLS, PVTI…RTVA, and PAQS…VEGN. 6 disulfide bridges follow: cysteine 738-cysteine 788, cysteine 829-cysteine 879, cysteine 920-cysteine 970, cysteine 1011-cysteine 1061, cysteine 1103-cysteine 1153, and cysteine 1195-cysteine 1245. 2 cysteine pairs are disulfide-bonded: cysteine 1381-cysteine 1522 and cysteine 1650-cysteine 1700.

In terms of assembly, component of the 3M complex, composed of core components CUL7, CCDC8 and OBSL1. Interacts with CCDC8. Interacts with CUL7; the interaction is direct. Interacts with FBXW8. Interacts (via N-terminal Ig-like domain) with TTN/titin (via C-terminal Ig-like domain); the interaction is direct. Widely expressed, with predominant levels found in the heart.

Its subcellular location is the cytoplasm. The protein localises to the cytoskeleton. It localises to the microtubule organizing center. It is found in the centrosome. The protein resides in the perinuclear region. Its subcellular location is the golgi apparatus. Its function is as follows. Core component of the 3M complex, a complex required to regulate microtubule dynamics and genome integrity. It is unclear how the 3M complex regulates microtubules, it could act by controlling the level of a microtubule stabilizer. Acts as a regulator of the Cul7-RING(FBXW8) ubiquitin-protein ligase, playing a critical role in the ubiquitin ligase pathway that regulates Golgi morphogenesis and dendrite patterning in brain. Required to localize CUL7 to the Golgi apparatus in neurons. This chain is Obscurin-like protein 1, found in Homo sapiens (Human).